The following is a 448-amino-acid chain: D-inositol 3-phosphate glycosyltransferase (448 aa).

1D-myo-inositol 3-phosphate contacts are provided by residues His35, 46–51 (DAGGLN), Lys104, Tyr137, Thr161, and Arg181. Residue Gly49 coordinates UDP-N-acetyl-alpha-D-glucosamine. The UDP-N-acetyl-alpha-D-glucosamine site is built by Arg255, Lys260, and Met321. Mg(2+)-binding residues include Tyr330, Arg331, and Ala333. The UDP-N-acetyl-alpha-D-glucosamine site is built by Glu343 and Glu351. Thr357 is a binding site for Mg(2+).

It belongs to the glycosyltransferase group 1 family. MshA subfamily. As to quaternary structure, homodimer.

The catalysed reaction is 1D-myo-inositol 3-phosphate + UDP-N-acetyl-alpha-D-glucosamine = 1D-myo-inositol 2-acetamido-2-deoxy-alpha-D-glucopyranoside 3-phosphate + UDP + H(+). Catalyzes the transfer of a N-acetyl-glucosamine moiety to 1D-myo-inositol 3-phosphate to produce 1D-myo-inositol 2-acetamido-2-deoxy-glucopyranoside 3-phosphate in the mycothiol biosynthesis pathway. The polypeptide is D-inositol 3-phosphate glycosyltransferase (Acidothermus cellulolyticus (strain ATCC 43068 / DSM 8971 / 11B)).